A 934-amino-acid chain; its full sequence is Serine/threonine-protein kinase PknD (934 aa).

In terms of domain architecture, Protein kinase spans 4 to 296 (YELIRLIGRG…ELRKALQPHL (293 aa)). Residues 10-18 (IGRGGMGEV) and Lys-33 each bind ATP. The active-site Proton acceptor is the Asp-138.

Belongs to the protein kinase superfamily. Ser/Thr protein kinase family. In terms of processing, autophosphorylated on serine and threonine residues.

It carries out the reaction L-seryl-[protein] + ATP = O-phospho-L-seryl-[protein] + ADP + H(+). The enzyme catalyses L-threonyl-[protein] + ATP = O-phospho-L-threonyl-[protein] + ADP + H(+). Its function is as follows. Together with the serine/threonine kinase Pkn1, may play a role in the specific interactions with host proteins during intracellular growth. The polypeptide is Serine/threonine-protein kinase PknD (Chlamydia muridarum (strain MoPn / Nigg)).